A 61-amino-acid chain; its full sequence is Photosystem II reaction center protein K (61 aa).

Positions 1–24 (MLNIFSLMYICLNSALYSSSFLFA) are excised as a propeptide. A helical transmembrane segment spans residues 40 to 60 (MPVIPVLFFLLAFVWQAAVSF).

This sequence belongs to the PsbK family. In terms of assembly, PSII is composed of 1 copy each of membrane proteins PsbA, PsbB, PsbC, PsbD, PsbE, PsbF, PsbH, PsbI, PsbJ, PsbK, PsbL, PsbM, PsbT, PsbX, PsbY, PsbZ, Psb30/Ycf12, at least 3 peripheral proteins of the oxygen-evolving complex and a large number of cofactors. It forms dimeric complexes.

The protein resides in the plastid. Its subcellular location is the chloroplast thylakoid membrane. In terms of biological role, one of the components of the core complex of photosystem II (PSII). PSII is a light-driven water:plastoquinone oxidoreductase that uses light energy to abstract electrons from H(2)O, generating O(2) and a proton gradient subsequently used for ATP formation. It consists of a core antenna complex that captures photons, and an electron transfer chain that converts photonic excitation into a charge separation. The sequence is that of Photosystem II reaction center protein K from Citrus sinensis (Sweet orange).